The sequence spans 126 residues: Holo-[acyl-carrier-protein] synthase (126 aa).

Asp-9 and Glu-58 together coordinate Mg(2+).

The protein belongs to the P-Pant transferase superfamily. AcpS family. It depends on Mg(2+) as a cofactor.

The protein localises to the cytoplasm. It catalyses the reaction apo-[ACP] + CoA = holo-[ACP] + adenosine 3',5'-bisphosphate + H(+). In terms of biological role, transfers the 4'-phosphopantetheine moiety from coenzyme A to a Ser of acyl-carrier-protein. This is Holo-[acyl-carrier-protein] synthase from Cronobacter sakazakii (strain ATCC BAA-894) (Enterobacter sakazakii).